The sequence spans 282 residues: Pantothenate synthetase (282 aa).

30 to 37 (MGFLHDGH) is an ATP binding site. His-37 acts as the Proton donor in catalysis. Gln-60 provides a ligand contact to (R)-pantoate. Residue Gln-60 participates in beta-alanine binding. 146-149 (GQKD) contributes to the ATP binding site. Gln-152 lines the (R)-pantoate pocket. ATP-binding positions include Ile-175 and 183–186 (KSSR).

The protein belongs to the pantothenate synthetase family. As to quaternary structure, homodimer.

Its subcellular location is the cytoplasm. The catalysed reaction is (R)-pantoate + beta-alanine + ATP = (R)-pantothenate + AMP + diphosphate + H(+). Its pathway is cofactor biosynthesis; (R)-pantothenate biosynthesis; (R)-pantothenate from (R)-pantoate and beta-alanine: step 1/1. Catalyzes the condensation of pantoate with beta-alanine in an ATP-dependent reaction via a pantoyl-adenylate intermediate. The protein is Pantothenate synthetase of Campylobacter jejuni subsp. jejuni serotype O:23/36 (strain 81-176).